Consider the following 87-residue polypeptide: Small ribosomal subunit protein bS20 (87 aa).

The segment covering 1-11 (MANHKSALKRI) has biased composition (basic residues). The disordered stretch occupies residues 1-23 (MANHKSALKRIKQTEKRTERNRH).

Belongs to the bacterial ribosomal protein bS20 family.

Its function is as follows. Binds directly to 16S ribosomal RNA. This chain is Small ribosomal subunit protein bS20, found in Geotalea daltonii (strain DSM 22248 / JCM 15807 / FRC-32) (Geobacter daltonii).